The sequence spans 248 residues: uncharacterized protein (248 aa).

Positions 33 to 57 form a coiled coil; it reads EWQLSEGQKRCEEINRQNRQLRVEK.

This is an uncharacterized protein from Escherichia coli (strain K12).